A 405-amino-acid chain; its full sequence is L-rhamnonate dehydratase (405 aa).

Residues H33 and R59 each contribute to the substrate site. 3 residues coordinate Mg(2+): D226, E252, and E280. H329 (proton acceptor) is an active-site residue. Position 349 (E349) interacts with substrate.

It belongs to the mandelate racemase/muconate lactonizing enzyme family. RhamD subfamily. In terms of assembly, homooctamer; tetramer of dimers. Mg(2+) is required as a cofactor.

It catalyses the reaction L-rhamnonate = 2-dehydro-3-deoxy-L-rhamnonate + H2O. Its function is as follows. Catalyzes the dehydration of L-rhamnonate to 2-keto-3-deoxy-L-rhamnonate (KDR). The chain is L-rhamnonate dehydratase from Escherichia coli O6:H1 (strain CFT073 / ATCC 700928 / UPEC).